Reading from the N-terminus, the 721-residue chain is Phosphoribosylformylglycinamidine synthase subunit PurL (721 aa).

Histidine 47 is a catalytic residue. ATP contacts are provided by tyrosine 50 and lysine 89. Residue glutamate 91 participates in Mg(2+) binding. Substrate-binding positions include serine 92–histidine 95 and arginine 114. Histidine 93 acts as the Proton acceptor in catalysis. Aspartate 115 contributes to the Mg(2+) binding site. Glutamine 238 contributes to the substrate binding site. Aspartate 266 provides a ligand contact to Mg(2+). Glutamate 310–glutamine 312 contacts substrate. ATP-binding residues include aspartate 490 and glycine 527. Asparagine 528 lines the Mg(2+) pocket. Residue serine 530 participates in substrate binding.

This sequence belongs to the FGAMS family. In terms of assembly, monomer. Part of the FGAM synthase complex composed of 1 PurL, 1 PurQ and 2 PurS subunits.

It localises to the cytoplasm. It carries out the reaction N(2)-formyl-N(1)-(5-phospho-beta-D-ribosyl)glycinamide + L-glutamine + ATP + H2O = 2-formamido-N(1)-(5-O-phospho-beta-D-ribosyl)acetamidine + L-glutamate + ADP + phosphate + H(+). Its pathway is purine metabolism; IMP biosynthesis via de novo pathway; 5-amino-1-(5-phospho-D-ribosyl)imidazole from N(2)-formyl-N(1)-(5-phospho-D-ribosyl)glycinamide: step 1/2. Part of the phosphoribosylformylglycinamidine synthase complex involved in the purines biosynthetic pathway. Catalyzes the ATP-dependent conversion of formylglycinamide ribonucleotide (FGAR) and glutamine to yield formylglycinamidine ribonucleotide (FGAM) and glutamate. The FGAM synthase complex is composed of three subunits. PurQ produces an ammonia molecule by converting glutamine to glutamate. PurL transfers the ammonia molecule to FGAR to form FGAM in an ATP-dependent manner. PurS interacts with PurQ and PurL and is thought to assist in the transfer of the ammonia molecule from PurQ to PurL. This is Phosphoribosylformylglycinamidine synthase subunit PurL from Ruegeria sp. (strain TM1040) (Silicibacter sp.).